The sequence spans 109 residues: Ribonuclease P protein component 4 (109 aa).

Zn(2+) is bound by residues Cys-65, Cys-68, Cys-94, and Cys-97.

This sequence belongs to the eukaryotic/archaeal RNase P protein component 4 family. Consists of a catalytic RNA component and at least 4-5 protein subunits. It depends on Zn(2+) as a cofactor.

It localises to the cytoplasm. The enzyme catalyses Endonucleolytic cleavage of RNA, removing 5'-extranucleotides from tRNA precursor.. In terms of biological role, part of ribonuclease P, a protein complex that generates mature tRNA molecules by cleaving their 5'-ends. The protein is Ribonuclease P protein component 4 of Methanococcus vannielii (strain ATCC 35089 / DSM 1224 / JCM 13029 / OCM 148 / SB).